The following is a 225-amino-acid chain: Enolase-phosphatase E1 (225 aa).

Belongs to the HAD-like hydrolase superfamily. MasA/MtnC family. In terms of assembly, monomer. Requires Mg(2+) as cofactor.

It carries out the reaction 5-methylsulfanyl-2,3-dioxopentyl phosphate + H2O = 1,2-dihydroxy-5-(methylsulfanyl)pent-1-en-3-one + phosphate. The protein operates within amino-acid biosynthesis; L-methionine biosynthesis via salvage pathway; L-methionine from S-methyl-5-thio-alpha-D-ribose 1-phosphate: step 3/6. It functions in the pathway amino-acid biosynthesis; L-methionine biosynthesis via salvage pathway; L-methionine from S-methyl-5-thio-alpha-D-ribose 1-phosphate: step 4/6. Its function is as follows. Bifunctional enzyme that catalyzes the enolization of 2,3-diketo-5-methylthiopentyl-1-phosphate (DK-MTP-1-P) into the intermediate 2-hydroxy-3-keto-5-methylthiopentenyl-1-phosphate (HK-MTPenyl-1-P), which is then dephosphorylated to form the acireductone 1,2-dihydroxy-3-keto-5-methylthiopentene (DHK-MTPene). In Shewanella halifaxensis (strain HAW-EB4), this protein is Enolase-phosphatase E1.